The sequence spans 60 residues: Cecropin-B (60 aa).

An N-terminal signal peptide occupies residues 1–25 (MNFTKLFILVAIAVLVVVGVQPVDG). Leu-59 bears the Leucine amide mark.

Belongs to the cecropin family.

The protein localises to the secreted. Functionally, cecropins have lytic and antibacterial activity against several Gram-positive and Gram-negative bacteria. This is Cecropin-B (CecB) from Anopheles gambiae (African malaria mosquito).